Reading from the N-terminus, the 265-residue chain is MDELERVYQSIKNIFTHSAPSEKLVGLQNRLSISLRFIEYAFETYQPERLAMSFNGGKDCLVLFLLCIYYLKEKYKEQAQAKLSNIPFVFVRPRDEFPEMDDFVNECQSKYRLNIIKISLPMKEAFCKFLKEHKHIQAILIGIRRLDPHGLHRIAFEVTDKGWPKFMRIQPILDWSYTEIWDLLLETNTKYCSLYDRGYTSLGGVSDTSPNPALKNPDGTYSPAYLLSDGSLERAGRNNTVPFSRTNSRFLYDSGASSYASSEVS.

This sequence belongs to the PAPS reductase family. FAD1 subfamily.

It catalyses the reaction FMN + ATP + H(+) = FAD + diphosphate. The protein operates within cofactor biosynthesis; FAD biosynthesis; FAD from FMN: step 1/1. Functionally, adenylates FMN to FAD. This is Probable FAD synthase from Schizosaccharomyces pombe (strain 972 / ATCC 24843) (Fission yeast).